A 630-amino-acid chain; its full sequence is Mannosyl-oligosaccharide 1,2-alpha-mannosidase IC (630 aa).

The Cytoplasmic segment spans residues 1-22 (MLMRKVPGFVPASPWGLRLPQK). Residues 23–43 (FLFLLFLSGLVTLCFGALFLL) form a helical; Signal-anchor for type II membrane protein membrane-spanning segment. Topologically, residues 44-630 (PHSSRLKRLF…DSSGRAWGRH (587 aa)) are lumenal. Residues 74–140 (PAREQEPPPN…ASRPGDEGVP (67 aa)) are disordered. Over residues 80–89 (PPPNPAPAAP) the composition is skewed to pro residues. Basic residues predominate over residues 102–113 (PRRRKGGLRRTR). S164 is modified (phosphoserine). A glycan (N-linked (GlcNAc...) asparagine) is linked at N250. Cysteines 453 and 485 form a disulfide. E499 (proton donor) is an active-site residue. Position 610 (T610) interacts with Ca(2+). The N-linked (GlcNAc...) asparagine glycan is linked to N618.

Belongs to the glycosyl hydrolase 47 family. Requires Ca(2+) as cofactor. As to expression, expressed in most tissues with the exception of lung, muscle and pancreas. Highly expressed in placenta.

The protein localises to the golgi apparatus membrane. It catalyses the reaction N(4)-(alpha-D-Man-(1-&gt;2)-alpha-D-Man-(1-&gt;2)-alpha-D-Man-(1-&gt;3)-[alpha-D-Man-(1-&gt;2)-alpha-D-Man-(1-&gt;3)-[alpha-D-Man-(1-&gt;2)-alpha-D-Man-(1-&gt;6)]-alpha-D-Man-(1-&gt;6)]-beta-D-Man-(1-&gt;4)-beta-D-GlcNAc-(1-&gt;4)-beta-D-GlcNAc)-L-asparaginyl-[protein] (N-glucan mannose isomer 9A1,2,3B1,2,3) + 4 H2O = N(4)-(alpha-D-Man-(1-&gt;3)-[alpha-D-Man-(1-&gt;3)-[alpha-D-Man-(1-&gt;6)]-alpha-D-Man-(1-&gt;6)]-beta-D-Man-(1-&gt;4)-beta-D-GlcNAc-(1-&gt;4)-beta-D-GlcNAc)-L-asparaginyl-[protein] (N-glucan mannose isomer 5A1,2) + 4 beta-D-mannose. The enzyme catalyses N(4)-(alpha-D-Man-(1-&gt;2)-alpha-D-Man-(1-&gt;2)-alpha-D-Man-(1-&gt;3)-[alpha-D-Man-(1-&gt;3)-[alpha-D-Man-(1-&gt;2)-alpha-D-Man-(1-&gt;6)]-alpha-D-Man-(1-&gt;6)]-beta-D-Man-(1-&gt;4)-beta-D-GlcNAc-(1-&gt;4)-beta-D-GlcNAc)-L-asparaginyl-[protein] (N-glucan mannose isomer 8A1,2,3B1,3) + 3 H2O = N(4)-(alpha-D-Man-(1-&gt;3)-[alpha-D-Man-(1-&gt;3)-[alpha-D-Man-(1-&gt;6)]-alpha-D-Man-(1-&gt;6)]-beta-D-Man-(1-&gt;4)-beta-D-GlcNAc-(1-&gt;4)-beta-D-GlcNAc)-L-asparaginyl-[protein] (N-glucan mannose isomer 5A1,2) + 3 beta-D-mannose. The protein operates within protein modification; protein glycosylation. Its activity is regulated as follows. Inhibited by both 1-deoxymannojirimycin and kifunensine. In terms of biological role, involved in the maturation of Asn-linked oligosaccharides. Trim alpha-1,2-linked mannose residues from Man(9)GlcNAc(2) to produce first Man(8)GlcNAc(2) then Man(6)GlcNAc and a small amount of Man(5)GlcNAc. This Homo sapiens (Human) protein is Mannosyl-oligosaccharide 1,2-alpha-mannosidase IC (MAN1C1).